We begin with the raw amino-acid sequence, 642 residues long: Threonine--tRNA ligase (642 aa).

Residues 1-63 (MNDITVTLPD…YNDARVVIVT (63 aa)) form the TGS domain. Residues 242–533 (DHRKIGQELD…LIEHFNGKFP (292 aa)) form a catalytic region. Zn(2+)-binding residues include Cys-334, His-385, and His-510.

It belongs to the class-II aminoacyl-tRNA synthetase family. As to quaternary structure, homodimer. The cofactor is Zn(2+).

It is found in the cytoplasm. It carries out the reaction tRNA(Thr) + L-threonine + ATP = L-threonyl-tRNA(Thr) + AMP + diphosphate + H(+). Its function is as follows. Catalyzes the attachment of threonine to tRNA(Thr) in a two-step reaction: L-threonine is first activated by ATP to form Thr-AMP and then transferred to the acceptor end of tRNA(Thr). The chain is Threonine--tRNA ligase from Haloquadratum walsbyi (strain DSM 16790 / HBSQ001).